The primary structure comprises 284 residues: Probable endonuclease 4 (284 aa).

Zn(2+) contacts are provided by H69, H113, E148, D182, H185, H217, D230, H232, and E262.

Belongs to the AP endonuclease 2 family. It depends on Zn(2+) as a cofactor.

It carries out the reaction Endonucleolytic cleavage to 5'-phosphooligonucleotide end-products.. Endonuclease IV plays a role in DNA repair. It cleaves phosphodiester bonds at apurinic or apyrimidinic (AP) sites, generating a 3'-hydroxyl group and a 5'-terminal sugar phosphate. This chain is Probable endonuclease 4, found in Bifidobacterium longum subsp. infantis (strain ATCC 15697 / DSM 20088 / JCM 1222 / NCTC 11817 / S12).